The primary structure comprises 132 residues: Hemoglobin subunit beta-1 (132 aa).

A Globin domain is found at 1–132 (WSKIDIDVCG…VVSALGRQYH (132 aa)). 2 residues coordinate heme b: histidine 49 and histidine 78.

Belongs to the globin family. As to quaternary structure, hb 1 is a heterotetramer of two alpha-1 and two beta-1 chains. Hb 2 is a heterotetramer of two alpha-2 and two beta-1 chains. Red blood cells.

Functionally, involved in oxygen transport from gills to the various peripheral tissues. The chain is Hemoglobin subunit beta-1 (hbb1) from Arctogadus glacialis (Arctic cod).